Here is a 104-residue protein sequence, read N- to C-terminus: Protein SMALL AUXIN UP-REGULATED RNA 12 (104 aa).

The protein belongs to the ARG7 family. As to expression, expressed in flowers and etiolated hypocotyls.

It is found in the cell membrane. Provide a mechanistic link between auxin and plasma membrane H(+)-ATPases (PM H(+)-ATPases, e.g. AHA1 and AHA2), and triggers PM H(+)-ATPases activity by promoting phosphorylation of their C-terminal autoinhibitory domain as a result of PP2C-D subfamily of type 2C phosphatases inhibition, thus leading to the acidification of the apoplast and the facilitation of solutes and water uptake to drive cell expansion. Triggers plant growth probably by promoting cell elongation. Regulates branch angles and bending. The chain is Protein SMALL AUXIN UP-REGULATED RNA 12 from Arabidopsis thaliana (Mouse-ear cress).